The following is a 308-amino-acid chain: tRNA dimethylallyltransferase 2 (308 aa).

13 to 20 (GPTASGKT) lines the ATP pocket. 15-20 (TASGKT) contributes to the substrate binding site. The interaction with substrate tRNA stretch occupies residues 38-41 (DSRQ).

This sequence belongs to the IPP transferase family. Monomer. Mg(2+) serves as cofactor.

The enzyme catalyses adenosine(37) in tRNA + dimethylallyl diphosphate = N(6)-dimethylallyladenosine(37) in tRNA + diphosphate. Catalyzes the transfer of a dimethylallyl group onto the adenine at position 37 in tRNAs that read codons beginning with uridine, leading to the formation of N6-(dimethylallyl)adenosine (i(6)A). The sequence is that of tRNA dimethylallyltransferase 2 from Bacteroides fragilis (strain YCH46).